The chain runs to 317 residues: MWFYLVTLVGLYHLLRWYRERQVVSHLQDKYVFITGCDSGFGNLLARQLDRRGMRVLAACLTEKGAEELRNKTSDRLETVILDVTKTESIVAATQWVKERVGDRGLWGLVNNAGVLQPFAYIEWYRPEDYMPIFQVNLIGLTQVTISMLFLVKKARGRIVNVSSALGRVALFGGFYSCSKYGVEAFSDVLRHEVQDFGVKVSIIEPGSFKTEMTDAELTIERTKKVWEAAPEHIKESYGQQFFDDFCSTTKRELMKCSRNLSLVTDCMEHALTSTHPRTRYSAGWDAKFFFIPLSYLPASLVDYLLAISRGKPAQAA.

The signal sequence occupies residues 1 to 17 (MWFYLVTLVGLYHLLRW). Residue 33-57 (FITGCDSGFGNLLARQLDRRGMRVL) coordinates NAD(+). Residues Asn71 and Asn161 are each glycosylated (N-linked (GlcNAc...) asparagine). Ser164 is a binding site for substrate. Residue Tyr176 is the Proton acceptor of the active site.

It belongs to the short-chain dehydrogenases/reductases (SDR) family. In terms of tissue distribution, detected in liver.

It localises to the microsome membrane. The protein localises to the early endosome membrane. It catalyses the reaction all-trans-retinol--[retinol-binding protein] + NAD(+) = all-trans-retinal--[retinol-binding protein] + NADH + H(+). It carries out the reaction all-trans-retinol + NAD(+) = all-trans-retinal + NADH + H(+). The enzyme catalyses androsterone + NAD(+) = 5alpha-androstan-3,17-dione + NADH + H(+). The catalysed reaction is testosterone + NAD(+) = androst-4-ene-3,17-dione + NADH + H(+). It catalyses the reaction 5alpha-androstane-3alpha,17beta-diol + NAD(+) = 17beta-hydroxy-5alpha-androstan-3-one + NADH + H(+). It carries out the reaction 17beta-estradiol + NAD(+) = estrone + NADH + H(+). The enzyme catalyses 17beta-estradiol + NADP(+) = estrone + NADPH + H(+). The catalysed reaction is 3alpha-hydroxy-5alpha-pregnan-20-one + NAD(+) = 5alpha-pregnane-3,20-dione + NADH + H(+). It catalyses the reaction 5alpha-androstane-3beta,17beta-diol + NAD(+) = 17beta-hydroxy-5alpha-androstan-3-one + NADH + H(+). It carries out the reaction 3beta-hydroxy-5alpha-androstan-17-one + NAD(+) = 5alpha-androstan-3,17-dione + NADH + H(+). With respect to regulation, inhibited by carbenoxolone and phenyl arsenoxide. In terms of biological role, NAD-dependent oxidoreductase with broad substrate specificity that shows both oxidative and reductive activity (in vitro). Has 17-beta-hydroxysteroid dehydrogenase activity towards various steroids (in vitro). Converts 5-alpha-androstan-3-alpha,17-beta-diol to androsterone and estradiol to estrone (in vitro). Has 3-alpha-hydroxysteroid dehydrogenase activity towards androsterone (in vitro). Has retinol dehydrogenase activity towards all-trans-retinol (in vitro). In Mus musculus (Mouse), this protein is 17-beta-hydroxysteroid dehydrogenase type 6 (Hsd17b6).